The primary structure comprises 403 residues: MEPGPGGRGAARGQRPPNAAQPREQERKLEQEKLSGVVKSVHRRLRKKYREVGDFDKIWREHCEDAETLCEYAVAMKNLADNHWAKTCEGEGRIEWCCSVCREYFQNGGKRKALEKDEKRAVLATKTTPALNVHESSKLEGPLTNLSFTSPDFITELLQASGKIRLLDVGSCFNPFLKFEEFLTVGIDIVPAVESVYKCDFLNLQLQQPLQLAQDAIDAFLKQLRNPIDALPGELFHVVVFSLLLSYFPSPYQRWICCKKAHELLVLNGLLLIITPDSSHQNRHAMMMKSWKIAIESLGFKRFKYSKFSHMHLMAFRKTSLKTTSDLVSRNYPGMLYIPQDFNSVEEEEYSNTSCYVRSDLEDEQLAYGFTELPEAPYDSDSGESQASSIPFYELEDPILLLS.

Gly residues predominate over residues 1 to 10; it reads MEPGPGGRGA. A disordered region spans residues 1–32; it reads MEPGPGGRGAARGQRPPNAAQPREQERKLEQE. Positions 11 to 22 are enriched in low complexity; sequence ARGQRPPNAAQP. A compositionally biased stretch (basic and acidic residues) spans 23 to 32; the sequence is REQERKLEQE. The S-adenosyl-L-methionine site is built by R93, G170, D188, D200, F201, and S242.

Belongs to the BMT2/SAMTOR family. Interacts with the GATOR1 complex; interaction is disrupted when SAMTOR binds S-adenosyl-L-methionine. Interacts with the KICSTOR complex; interaction is disrupted when SAMTOR binds S-adenosyl-L-methionine.

In terms of biological role, S-adenosyl-L-methionine-binding protein that acts as an inhibitor of mTORC1 signaling via interaction with the GATOR1 and KICSTOR complexes. Acts as a sensor of S-adenosyl-L-methionine to signal methionine sufficiency to mTORC1: in presence of methionine, binds S-adenosyl-L-methionine, leading to disrupt interaction with the GATOR1 and KICSTOR complexes and promote mTORC1 signaling. Upon methionine starvation, S-adenosyl-L-methionine levels are reduced, thereby promoting the association with GATOR1 and KICSTOR, leading to inhibit mTORC1 signaling. Probably also acts as a S-adenosyl-L-methionine-dependent methyltransferase. This is S-adenosylmethionine sensor upstream of mTORC1 from Mus musculus (Mouse).